Consider the following 722-residue polypeptide: DUF724 domain-containing protein 7 (722 aa).

A disordered region spans residues 424-449 (KTTPKKKLQAMKNQKSSTNDSVGEKV). Over residues 434–444 (MKNQKSSTNDS) the composition is skewed to polar residues. The 181-residue stretch at 540-720 (VLPFVKKSQL…HEFQAILAAP (181 aa)) folds into the DUF724 domain. A coiled-coil region spans residues 645–712 (CALEELKAVE…DQEVQNVDHE (68 aa)).

As to quaternary structure, homodimer. Interacts wtih ABAP1, ARIA and LHP1. Interacts with the non-modified histones H1, H2B, H3 and H4. In terms of tissue distribution, expressed in roots, leaves, stems and flowers.

It is found in the nucleus. Functionally, may act as a link between DNA replication, transcription and chromatin remodeling during flower development. May participate in the repression of LHP1-targeted genes during flower development by direct interaction with LHP1. May be involved in the polar growth of plant cells via transportation of RNAs. This Arabidopsis thaliana (Mouse-ear cress) protein is DUF724 domain-containing protein 7.